Here is a 146-residue protein sequence, read N- to C-terminus: uncharacterized protein (146 aa).

Positions 87 to 121 (SRSHHSTAKSAKSALSSDSGDGSDPDPEPETFPSA) are disordered. Residues 94–106 (AKSAKSALSSDSG) are compositionally biased toward low complexity.

This is an uncharacterized protein from Escherichia coli (strain K12).